The following is a 393-amino-acid chain: Tryptophan synthase beta chain (393 aa).

An N6-(pyridoxal phosphate)lysine modification is found at lysine 85.

It belongs to the TrpB family. As to quaternary structure, tetramer of two alpha and two beta chains. It depends on pyridoxal 5'-phosphate as a cofactor.

The catalysed reaction is (1S,2R)-1-C-(indol-3-yl)glycerol 3-phosphate + L-serine = D-glyceraldehyde 3-phosphate + L-tryptophan + H2O. It functions in the pathway amino-acid biosynthesis; L-tryptophan biosynthesis; L-tryptophan from chorismate: step 5/5. Functionally, the beta subunit is responsible for the synthesis of L-tryptophan from indole and L-serine. The polypeptide is Tryptophan synthase beta chain (trpB) (Helicobacter pylori (strain ATCC 700392 / 26695) (Campylobacter pylori)).